The following is a 180-amino-acid chain: Large ribosomal subunit protein uL5 (180 aa).

The protein belongs to the universal ribosomal protein uL5 family. In terms of assembly, part of the 50S ribosomal subunit; part of the 5S rRNA/L5/L18/L25 subcomplex. Contacts the 5S rRNA and the P site tRNA. Forms a bridge to the 30S subunit in the 70S ribosome.

Its function is as follows. This is one of the proteins that bind and probably mediate the attachment of the 5S RNA into the large ribosomal subunit, where it forms part of the central protuberance. In the 70S ribosome it contacts protein S13 of the 30S subunit (bridge B1b), connecting the 2 subunits; this bridge is implicated in subunit movement. Contacts the P site tRNA; the 5S rRNA and some of its associated proteins might help stabilize positioning of ribosome-bound tRNAs. This chain is Large ribosomal subunit protein uL5, found in Streptococcus pyogenes serotype M49 (strain NZ131).